A 565-amino-acid polypeptide reads, in one-letter code: MTTREFDYIICGAGSAGNVLATRLTEDPDVTVLLLEAGGPDYRFDFRTQMPAALAYPLQGRRYNWAYETDPEPHMNNRRMECGRGKGLGGSSLINGMCYIRGNALDYDNWSTHKGLEDWTYLDCLPYFRKAETRDVGPNDYHGGDGPVSVTTSKPGVNPLFEAMVEAGVQAGYPRTDDLNGYQQEGFGPMDRTVTPRGRRASTARGYLDQARARPNLEIVTHALADRILFSGKRATGVTFLHGSARVTAHARREVLVCSGAIASPQLLQRSGVGPGEWLRELDIPVVLDLPGVGRNLQDHLEMYIQFECKEPVSLYPALKWWNQPKIGLDWMINGTGLGASNHFEAGGFIRTRDDDLWPNIQYHFLPVAINYNGSNAIEMHGFQAHVGSMRSPSRGRVKLKSRDPNAHPSILFNYMAEALDWREFRDAIRATREIMHQPALDRFRGRELNPGADLKSDNELDAFVRARAETAFHPSCSCKMGYDDMAVVDNEGRVHGIDGLRVVDASIMPIITTGNLNAPTIMIAEKIADKIRKRKPLERSNARYYVANGAPARGGKPARAPAAV.

Asp-7–Glu-36 contacts FAD. His-474 acts as the Proton acceptor in catalysis.

This sequence belongs to the GMC oxidoreductase family. The cofactor is FAD.

The catalysed reaction is choline + A = betaine aldehyde + AH2. The enzyme catalyses betaine aldehyde + NAD(+) + H2O = glycine betaine + NADH + 2 H(+). It functions in the pathway amine and polyamine biosynthesis; betaine biosynthesis via choline pathway; betaine aldehyde from choline (cytochrome c reductase route): step 1/1. Functionally, involved in the biosynthesis of the osmoprotectant glycine betaine. Catalyzes the oxidation of choline to betaine aldehyde and betaine aldehyde to glycine betaine at the same rate. This Burkholderia thailandensis (strain ATCC 700388 / DSM 13276 / CCUG 48851 / CIP 106301 / E264) protein is Oxygen-dependent choline dehydrogenase.